Here is a 430-residue protein sequence, read N- to C-terminus: Adenylosuccinate synthetase (430 aa).

Residues 12–18 (GDEGKGK) and 40–42 (GHT) contribute to the GTP site. The active-site Proton acceptor is Asp-13. Mg(2+) is bound by residues Asp-13 and Gly-40. IMP contacts are provided by residues 13-16 (DEGK), 38-41 (NAGH), Thr-130, Arg-144, Gln-224, Thr-239, and Arg-303. His-41 functions as the Proton donor in the catalytic mechanism. 299-305 (VVTGRKR) contacts substrate. GTP contacts are provided by residues Arg-305, 331–333 (KLD), and 413–415 (STS).

Belongs to the adenylosuccinate synthetase family. As to quaternary structure, homodimer. It depends on Mg(2+) as a cofactor.

It is found in the cytoplasm. The catalysed reaction is IMP + L-aspartate + GTP = N(6)-(1,2-dicarboxyethyl)-AMP + GDP + phosphate + 2 H(+). It functions in the pathway purine metabolism; AMP biosynthesis via de novo pathway; AMP from IMP: step 1/2. In terms of biological role, plays an important role in the de novo pathway of purine nucleotide biosynthesis. Catalyzes the first committed step in the biosynthesis of AMP from IMP. The chain is Adenylosuccinate synthetase from Methylobacterium nodulans (strain LMG 21967 / CNCM I-2342 / ORS 2060).